Consider the following 94-residue polypeptide: Co-chaperonin GroES (94 aa).

Belongs to the GroES chaperonin family. As to quaternary structure, heptamer of 7 subunits arranged in a ring. Interacts with the chaperonin GroEL.

It localises to the cytoplasm. Together with the chaperonin GroEL, plays an essential role in assisting protein folding. The GroEL-GroES system forms a nano-cage that allows encapsulation of the non-native substrate proteins and provides a physical environment optimized to promote and accelerate protein folding. GroES binds to the apical surface of the GroEL ring, thereby capping the opening of the GroEL channel. The sequence is that of Co-chaperonin GroES from Exiguobacterium sibiricum (strain DSM 17290 / CCUG 55495 / CIP 109462 / JCM 13490 / 255-15).